The chain runs to 53 residues: Lectin alpha chain (53 aa).

Belongs to the leguminous lectin family. In terms of assembly, tetramer of two alpha and two beta chains.

The protein is Lectin alpha chain of Lathyrus clymenum (Spanish vetchling).